Consider the following 428-residue polypeptide: C4-dicarboxylate transport protein 1 (428 aa).

8 consecutive transmembrane segments (helical) span residues Phe-5–Glu-27, Ile-42–Met-64, Ala-77–Phe-99, Ile-150–Met-167, Ile-188–Lys-210, Thr-225–Phe-247, Ile-314–Ala-336, and Phe-351–Leu-373.

It belongs to the dicarboxylate/amino acid:cation symporter (DAACS) (TC 2.A.23) family.

It is found in the cell inner membrane. Functionally, responsible for the transport of dicarboxylates such as succinate, fumarate, and malate from the periplasm across the membrane. This chain is C4-dicarboxylate transport protein 1 (dctA1), found in Ralstonia nicotianae (strain ATCC BAA-1114 / GMI1000) (Ralstonia solanacearum).